The following is a 291-amino-acid chain: START domain-containing protein 10 (291 aa).

Methionine 1 is subject to N-acetylmethionine. Residues 1 to 20 (MEKLAASTEPQGPRPVLGRE) are disordered. One can recognise an START domain in the interval 14-224 (RPVLGRESVQ…MYKACLKYPE (211 aa)). Residues lysine 94, lysine 197, and lysine 202 each carry the N6-succinyllysine modification. A phosphoserine mark is found at serine 253 and serine 259. Residues 260–291 (LENIDESAVAESREERMGGAGGEGSDDDTSLT) form a disordered region. Serine 284 is modified (phosphoserine; by CK2). Serine 289 is modified (phosphoserine).

Phosphorylation at Ser-284 by CK2 negatively regulates lipid transfer activity, possibly by decreasing membrane association.

It is found in the cell projection. The protein resides in the cilium. The protein localises to the flagellum. Its subcellular location is the cytoplasm. It localises to the membrane. In terms of biological role, may play metabolic roles in sperm maturation or fertilization. Phospholipid transfer protein that preferentially selects lipid species containing a palmitoyl or stearoyl chain on the sn-1 and an unsaturated fatty acyl chain (18:1 or 18:2) on the sn-2 position. Able to transfer phosphatidylcholine (PC) and phosphatidyetanolamline (PE) between membranes. The polypeptide is START domain-containing protein 10 (STARD10) (Homo sapiens (Human)).